A 100-amino-acid polypeptide reads, in one-letter code: UPF0235 protein Cvib_0403 (100 aa).

This sequence belongs to the UPF0235 family.

This Chlorobium phaeovibrioides (strain DSM 265 / 1930) (Prosthecochloris vibrioformis (strain DSM 265)) protein is UPF0235 protein Cvib_0403.